Consider the following 72-residue polypeptide: Translation initiation factor IF-1 (72 aa).

The region spanning Met-1–Lys-72 is the S1-like domain.

This sequence belongs to the IF-1 family. In terms of assembly, component of the 30S ribosomal translation pre-initiation complex which assembles on the 30S ribosome in the order IF-2 and IF-3, IF-1 and N-formylmethionyl-tRNA(fMet); mRNA recruitment can occur at any time during PIC assembly.

The protein resides in the cytoplasm. Its function is as follows. One of the essential components for the initiation of protein synthesis. Stabilizes the binding of IF-2 and IF-3 on the 30S subunit to which N-formylmethionyl-tRNA(fMet) subsequently binds. Helps modulate mRNA selection, yielding the 30S pre-initiation complex (PIC). Upon addition of the 50S ribosomal subunit IF-1, IF-2 and IF-3 are released leaving the mature 70S translation initiation complex. This Geotalea uraniireducens (strain Rf4) (Geobacter uraniireducens) protein is Translation initiation factor IF-1.